Reading from the N-terminus, the 425-residue chain is Probable proline--tRNA ligase, mitochondrial (425 aa).

It belongs to the class-II aminoacyl-tRNA synthetase family.

The protein localises to the mitochondrion. It catalyses the reaction tRNA(Pro) + L-proline + ATP = L-prolyl-tRNA(Pro) + AMP + diphosphate. In Schizosaccharomyces pombe (strain 972 / ATCC 24843) (Fission yeast), this protein is Probable proline--tRNA ligase, mitochondrial.